The following is a 452-amino-acid chain: cAMP/cGMP-dependent 3',5'-cAMP/cGMP phosphodiesterase A (452 aa).

Positions 1–23 are cleaved as a signal peptide; the sequence is MALNKKLISLLLLIFIILNIVNS. Residues 24-49 constitute a propeptide that is removed on maturation; the sequence is HQQEDCDDDDEDIGISAERSERRSVK. Asn101, Asn141, and Asn277 each carry an N-linked (GlcNAc...) asparagine glycan.

It belongs to the cyclic nucleotide phosphodiesterase class-II family.

The protein resides in the secreted. It localises to the extracellular space. Its subcellular location is the cell surface. It catalyses the reaction 3',5'-cyclic AMP + H2O = AMP + H(+). It carries out the reaction 3',5'-cyclic GMP + H2O = GMP + H(+). Its activity is regulated as follows. Inhibited by dithiotreitol (DTT). Phosphodiesterase which displays a preference for cAMP over cGMP. Involved in the degradation of extracellular cAMP. Maintains the responsiveness of cells to the chemoattractant cAMP during the aggregation phase of development. This is cAMP/cGMP-dependent 3',5'-cAMP/cGMP phosphodiesterase A (pdsA) from Dictyostelium discoideum (Social amoeba).